A 138-amino-acid chain; its full sequence is Acidic phospholipase A2 Cvv-E6b (138 aa).

An N-terminal signal peptide occupies residues 1 to 16; the sequence is MRTLWILAVLLLGVEG. 7 disulfide bridges follow: Cys-42–Cys-131, Cys-44–Cys-60, Cys-59–Cys-111, Cys-65–Cys-138, Cys-66–Cys-104, Cys-73–Cys-97, and Cys-91–Cys-102. Ca(2+) contacts are provided by Tyr-43, Gly-45, and Gly-47. The active site involves His-63. Position 64 (Asp-64) interacts with Ca(2+). Residue Asp-105 is part of the active site.

The cofactor is Ca(2+). Expressed by the venom gland.

It is found in the secreted. The catalysed reaction is a 1,2-diacyl-sn-glycero-3-phosphocholine + H2O = a 1-acyl-sn-glycero-3-phosphocholine + a fatty acid + H(+). Its function is as follows. Snake venom phospholipase A2 (PLA2) that shows very low inhibition of ADP-induced platelet aggregation in platelet-rich plasma of human, rabbit and guinea pig. PLA2 catalyzes the calcium-dependent hydrolysis of the 2-acyl groups in 3-sn-phosphoglycerides. The sequence is that of Acidic phospholipase A2 Cvv-E6b from Crotalus viridis viridis (Prairie rattlesnake).